We begin with the raw amino-acid sequence, 352 residues long: MSFTANLDRIVARAEELRASLSEGLNGDSFAAASRELAELEPVVARIEELWAAERGLAEAEAMLADPDMRELAESEAEILREKLPSLTREIRIALLPKDEADERSAILEIRPAAGGDEASLFAAQLFSMYQRYAEIRGWRFEILEYDDTGLGGLKGGMAEITGRSVFARLKYESGVHRVQRVPATESQGRIHTSTVTVAVLPEAEDVDVQVDEGDLRIDVYRASGAGGQHVNKTESAVRITHLPSGIVVAMQEEKSQHKNRAKAMKILKARLYEQQRAALHASRAADRRAQVGTGDRSERIRTYNFPQGRVSDHRINLTLYKIDRVMLGELDDFVDALTAEDQAARLSAQEL.

The residue at position 229 (Gln-229) is an N5-methylglutamine.

This sequence belongs to the prokaryotic/mitochondrial release factor family. In terms of processing, methylated by PrmC. Methylation increases the termination efficiency of RF1.

Its subcellular location is the cytoplasm. Peptide chain release factor 1 directs the termination of translation in response to the peptide chain termination codons UAG and UAA. This Granulibacter bethesdensis (strain ATCC BAA-1260 / CGDNIH1) protein is Peptide chain release factor 1.